The chain runs to 309 residues: Homoserine kinase (309 aa).

91–101 (PIGSGLGSSAC) provides a ligand contact to ATP.

The protein belongs to the GHMP kinase family. Homoserine kinase subfamily.

It localises to the cytoplasm. It carries out the reaction L-homoserine + ATP = O-phospho-L-homoserine + ADP + H(+). It participates in amino-acid biosynthesis; L-threonine biosynthesis; L-threonine from L-aspartate: step 4/5. In terms of biological role, catalyzes the ATP-dependent phosphorylation of L-homoserine to L-homoserine phosphate. This Klebsiella pneumoniae subsp. pneumoniae (strain ATCC 700721 / MGH 78578) protein is Homoserine kinase.